The sequence spans 166 residues: Anterior gradient protein 3 (166 aa).

Positions 1–21 (MMLHSALGLCLLLVTVSSNLA) are cleaved as a signal peptide. Residues 163 to 166 (QSEL) carry the Prevents secretion from ER motif.

It belongs to the AGR family. Interacts with LYPD3 and DAG1 (alphaDAG1). In terms of tissue distribution, expressed in the lung, in the ciliated cells of the airway epithelium. Expression increased with differentiation of airway epithelial cells. Not detected in the mucous cells. Expressed in ciliated cells in the oviduct. Also detected in stomach, colon, prostate and liver. Expressed in breast, ovary, prostate and liver cancer. Expression is associated with the level of differentiation of breast cancer (at protein level).

It is found in the endoplasmic reticulum. Its function is as follows. Required for calcium-mediated regulation of ciliary beat frequency and mucociliary clearance in the airway. Might be involved in the regulation of intracellular calcium in tracheal epithelial cells. The chain is Anterior gradient protein 3 (AGR3) from Homo sapiens (Human).